The sequence spans 273 residues: ATP synthase F(1) complex subunit gamma, mitochondrial (273 aa).

Lys14 bears the N6-acetyllysine mark. Lys24 carries the N6-succinyllysine modification. Lys30 is modified (N6-acetyllysine). An N6-acetyllysine; alternate modification is found at Lys90. N6-succinyllysine; alternate is present on Lys90. Lys113 carries the N6-acetyllysine modification. Residue Ser121 is modified to Phosphoserine. N6-acetyllysine; alternate is present on Lys129. Lys129 is modified (N6-succinyllysine; alternate). The residue at position 172 (Lys172) is an N6-acetyllysine. Lys245 is modified (N6-succinyllysine).

The protein belongs to the ATPase gamma chain family. As to quaternary structure, component of the ATP synthase complex composed at least of ATP5F1A/subunit alpha, ATP5F1B/subunit beta, ATP5MC1/subunit c (homooctomer), MT-ATP6/subunit a, MT-ATP8/subunit 8, ATP5ME/subunit e, ATP5MF/subunit f, ATP5MG/subunit g, ATP5MK/subunit k, ATP5MJ/subunit j, ATP5F1C/subunit gamma, ATP5F1D/subunit delta, ATP5F1E/subunit epsilon, ATP5PF/subunit F6, ATP5PB/subunit b, ATP5PD/subunit d, ATP5PO/subunit OSCP. ATP synthase complex consists of a soluble F(1) head domain (subunits alpha(3) and beta(3)) - the catalytic core - and a membrane F(0) domain - the membrane proton channel (subunits c, a, 8, e, f, g, k and j). These two domains are linked by a central stalk (subunits gamma, delta, and epsilon) rotating inside the F1 region and a stationary peripheral stalk (subunits F6, b, d, and OSCP). Interacts with FLVCR2; this interaction occurs in the absence of heme and is disrupted upon heme binding.

It localises to the mitochondrion inner membrane. Its function is as follows. Subunit gamma, of the mitochondrial membrane ATP synthase complex (F(1)F(0) ATP synthase or Complex V) that produces ATP from ADP in the presence of a proton gradient across the membrane which is generated by electron transport complexes of the respiratory chain. ATP synthase complex consist of a soluble F(1) head domain - the catalytic core - and a membrane F(1) domain - the membrane proton channel. These two domains are linked by a central stalk rotating inside the F(1) region and a stationary peripheral stalk. During catalysis, ATP synthesis in the catalytic domain of F(1) is coupled via a rotary mechanism of the central stalk subunits to proton translocation. In vivo, can only synthesize ATP although its ATP hydrolase activity can be activated artificially in vitro. With the central stalk subunit delta, is essential for the biogenesis of F(1) catalytic part of the ATP synthase complex namely in the formation of F1 assembly intermediate. The protein is ATP synthase F(1) complex subunit gamma, mitochondrial of Rattus norvegicus (Rat).